The following is a 126-amino-acid chain: Large ribosomal subunit protein uL22 (126 aa).

The protein belongs to the universal ribosomal protein uL22 family. As to quaternary structure, part of the 50S ribosomal subunit.

In terms of biological role, this protein binds specifically to 23S rRNA; its binding is stimulated by other ribosomal proteins, e.g. L4, L17, and L20. It is important during the early stages of 50S assembly. It makes multiple contacts with different domains of the 23S rRNA in the assembled 50S subunit and ribosome. Its function is as follows. The globular domain of the protein is located near the polypeptide exit tunnel on the outside of the subunit, while an extended beta-hairpin is found that lines the wall of the exit tunnel in the center of the 70S ribosome. This Prochlorococcus marinus (strain NATL2A) protein is Large ribosomal subunit protein uL22.